A 65-amino-acid polypeptide reads, in one-letter code: Large ribosomal subunit protein bL35 (65 aa).

It belongs to the bacterial ribosomal protein bL35 family.

The chain is Large ribosomal subunit protein bL35 from Parabacteroides distasonis (strain ATCC 8503 / DSM 20701 / CIP 104284 / JCM 5825 / NCTC 11152).